A 1075-amino-acid chain; its full sequence is DNA-directed RNA polymerase subunit beta (1075 aa).

Belongs to the RNA polymerase beta chain family. In plastids the minimal PEP RNA polymerase catalytic core is composed of four subunits: alpha, beta, beta', and beta''. When a (nuclear-encoded) sigma factor is associated with the core the holoenzyme is formed, which can initiate transcription.

It is found in the plastid. The protein resides in the chloroplast. The catalysed reaction is RNA(n) + a ribonucleoside 5'-triphosphate = RNA(n+1) + diphosphate. DNA-dependent RNA polymerase catalyzes the transcription of DNA into RNA using the four ribonucleoside triphosphates as substrates. The polypeptide is DNA-directed RNA polymerase subunit beta (Sorghum bicolor (Sorghum)).